Reading from the N-terminus, the 365-residue chain is Class I histocompatibility antigen, B alpha chain (365 aa).

The first 24 residues, 1–24 (MTVMAPRTLLLLLSGALVLTETWA), serve as a signal peptide directing secretion. Residues 25-114 (GSHSMRYFST…ALGYYNQSEA (90 aa)) form an alpha-1 region. Over 25–308 (GSHSMRYFST…EPPSQPTIPI (284 aa)) the chain is Extracellular. N-linked (GlcNAc...) asparagine glycosylation occurs at asparagine 110. Residues 115–206 (GSHTIQMMSG…ENGKETLQRA (92 aa)) are alpha-2. Cystine bridges form between cysteine 125–cysteine 188 and cysteine 227–cysteine 283. Residues 207-298 (EPPKTHVTHH…GLPEPLTLRW (92 aa)) form an alpha-3 region. The Ig-like C1-type domain occupies 209–297 (PKTHVTHHPV…EGLPEPLTLR (89 aa)). The segment at 299 to 308 (EPPSQPTIPI) is connecting peptide. A helical membrane pass occupies residues 309 to 332 (MGIVAILAILGAVVTGAVVTAVMW). At 333–365 (RKKSSDKKGGSYSQAARSDSAQGSDVSLTACKV) the chain is on the cytoplasmic side. A disordered region spans residues 337-361 (SDKKGGSYSQAARSDSAQGSDVSLT). Residues 346–359 (QAARSDSAQGSDVS) show a composition bias toward polar residues. Phosphoserine occurs at positions 356 and 359.

This sequence belongs to the MHC class I family. In terms of assembly, heterodimer of an alpha chain and a beta chain (beta-2-microglobulin).

The protein resides in the membrane. Its function is as follows. Involved in the presentation of foreign antigens to the immune system. This chain is Class I histocompatibility antigen, B alpha chain, found in Saguinus oedipus (Cotton-top tamarin).